The chain runs to 51 residues: U-Asilidin(1)-Mar1a (51 aa).

A signal peptide spans 1–23 (MANYIEVFSVLAIIFATVLAALA). Disulfide bonds link C26-C40, C33-C44, and C39-C49.

The protein belongs to the asilidin-1 family. In terms of tissue distribution, expressed by the venom gland. Is the most highly expressed peptide and is around 3000 times higher expressed in the thoracic glands compared to its body tissues.

It is found in the secreted. Induces neurotoxic effect on honeybees, including slow movements, disorientation and paralysis. Since it provokes similar symptoms than omega-atracotoxin, it is probable that it acts in the same way by inhibiting voltage-gated calcium channels. In Machimus arthriticus (Breck robberfly), this protein is U-Asilidin(1)-Mar1a.